The following is a 690-amino-acid chain: Serotransferrin (690 aa).

An N-terminal signal peptide occupies residues 1 to 17 (MKPLLLLTLLGCLAAAL). 2 consecutive Transferrin-like domains span residues 24 to 329 (VKWC…SLKK) and 340 to 670 (IKWC…SLRK). An intrachain disulfide couples cysteine 27 to cysteine 49. Positions 73 and 103 each coordinate Fe(3+). Cystine bridges form between cysteine 126-cysteine 206, cysteine 171-cysteine 185, and cysteine 234-cysteine 248. 4 residues coordinate hydrogencarbonate: threonine 128, lysine 132, alanine 134, and glycine 135. Residue tyrosine 200 participates in Fe(3+) binding. Histidine 256 provides a ligand contact to Fe(3+). Disulfide bonds link cysteine 343–cysteine 379 and cysteine 353–cysteine 370. Residues aspartate 394 and tyrosine 429 each coordinate Fe(3+). 7 disulfides stabilise this stretch: cysteine 404/cysteine 682, cysteine 419/cysteine 643, cysteine 452/cysteine 530, cysteine 476/cysteine 671, cysteine 486/cysteine 499, cysteine 496/cysteine 513, and cysteine 570/cysteine 584. The hydrogencarbonate site is built by threonine 454, arginine 458, alanine 460, and glycine 461. A Fe(3+)-binding site is contributed by tyrosine 524. Residue histidine 592 coordinates Fe(3+).

Belongs to the transferrin family. As to quaternary structure, monomer.

It is found in the secreted. Transferrins are iron binding transport proteins which can bind two Fe(3+) ions in association with the binding of an anion, usually bicarbonate. The sequence is that of Serotransferrin (tf) from Oryzias latipes (Japanese rice fish).